A 554-amino-acid polypeptide reads, in one-letter code: Malate synthase 1 (554 aa).

The Proton acceptor role is filled by Arg177. The active-site Proton donor is Asp457. An SKL peroxisome targeting motif motif is present at residues 552-554 (SKL).

This sequence belongs to the malate synthase family. As to quaternary structure, interacts with PEX9.

Its subcellular location is the peroxisome matrix. It catalyses the reaction glyoxylate + acetyl-CoA + H2O = (S)-malate + CoA + H(+). It functions in the pathway carbohydrate metabolism; glyoxylate cycle; (S)-malate from isocitrate: step 2/2. Functionally, malate synthase which takes part in the glyoxylate cycle. MLS1 activity is essential for cells to grow on oleic acid as a sole carbon source. Two steps of the glyoxylate cycle take place in the cytosol, the splitting of isocitrate into succinate and glyoxylate, and the dehydrogenation of malate to oxaloacetate. However, the formation of malate from glyoxylate and acetyl-CoA undertaken MLS1, occurs in the peroxisomes when cells are grown on oleic acid. The source of acetyl-CoA being either peroxisomal when breaking down fatty acids, or cytosolic when extra-cellular two-carbon substrates are used, therefore, although not strictly essential, the peroxisomal localization of MLS1 appears to be advantageous for cells growing on oleic acid, in that acetyl-CoA production and utilization are thereby intimately compartmentalized together to increase efficiency. The sequence is that of Malate synthase 1 from Saccharomyces cerevisiae (strain ATCC 204508 / S288c) (Baker's yeast).